The chain runs to 752 residues: RNA-directed RNA polymerase catalytic subunit (752 aa).

2 short sequence motifs (nuclear localization signal) span residues 187-195 (IKKKLPAKN) and 203-216 (RIPM…TRVE). A promoter-binding site region spans residues 249-256 (RGFVLVVE). The RdRp catalytic domain maps to 286-482 (VAKMLSNCPP…GINMSKKKSY (197 aa)).

Belongs to the influenza viruses polymerase PB1 family. In terms of assembly, influenza RNA polymerase is composed of three subunits: PB1, PB2 and PA. Interacts (via N-terminus) with PA (via C-terminus). Interacts (via C-terminus) with PB2 (via N-terminus); this interaction is essential for transcription initiation. In terms of processing, phosphorylated by host PRKCA.

The protein localises to the host nucleus. Its subcellular location is the host cytoplasm. It carries out the reaction RNA(n) + a ribonucleoside 5'-triphosphate = RNA(n+1) + diphosphate. In terms of biological role, RNA-dependent RNA polymerase which is responsible for replication and transcription of virus RNA segments. The transcription of viral mRNAs occurs by a unique mechanism called cap-snatching. 5' methylated caps of cellular mRNAs are cleaved after 10-13 nucleotides by PA. In turn, these short capped RNAs are used as primers by PB1 for transcription of viral mRNAs. During virus replication, PB1 initiates RNA synthesis and copy vRNA into complementary RNA (cRNA) which in turn serves as a template for the production of more vRNAs. This Influenza B virus (strain B/Ann Arbor/1/1966 [wild-type]) protein is RNA-directed RNA polymerase catalytic subunit.